The chain runs to 126 residues: Non-specific lipid-transfer protein 13 (126 aa).

Residues 1–20 form the signal peptide; sequence MDTHTTKLVAISLLLLLVIS. Cystine bridges form between cysteine 36–cysteine 85, cysteine 46–cysteine 61, cysteine 62–cysteine 109, and cysteine 83–cysteine 123.

This sequence belongs to the plant LTP family.

In terms of biological role, plant non-specific lipid-transfer proteins transfer phospholipids as well as galactolipids across membranes. May play a role in wax or cutin deposition in the cell walls of expanding epidermal cells and certain secretory tissues. This chain is Non-specific lipid-transfer protein 13 (LTP13), found in Arabidopsis thaliana (Mouse-ear cress).